The primary structure comprises 453 residues: Serine--tRNA ligase (453 aa).

249–251 contributes to the L-serine binding site; sequence TSE. ATP is bound by residues 280–282 and valine 296; that span reads RKE. Glutamate 303 contacts L-serine. 367-370 is an ATP binding site; it reads EMVS. Threonine 404 contributes to the L-serine binding site.

This sequence belongs to the class-II aminoacyl-tRNA synthetase family. Type-1 seryl-tRNA synthetase subfamily. As to quaternary structure, homodimer. The tRNA molecule binds across the dimer.

Its subcellular location is the cytoplasm. It carries out the reaction tRNA(Ser) + L-serine + ATP = L-seryl-tRNA(Ser) + AMP + diphosphate + H(+). The enzyme catalyses tRNA(Sec) + L-serine + ATP = L-seryl-tRNA(Sec) + AMP + diphosphate + H(+). Its pathway is aminoacyl-tRNA biosynthesis; selenocysteinyl-tRNA(Sec) biosynthesis; L-seryl-tRNA(Sec) from L-serine and tRNA(Sec): step 1/1. Its function is as follows. Catalyzes the attachment of serine to tRNA(Ser). Is also able to aminoacylate tRNA(Sec) with serine, to form the misacylated tRNA L-seryl-tRNA(Sec), which will be further converted into selenocysteinyl-tRNA(Sec). This is Serine--tRNA ligase from Archaeoglobus fulgidus (strain ATCC 49558 / DSM 4304 / JCM 9628 / NBRC 100126 / VC-16).